We begin with the raw amino-acid sequence, 1104 residues long: Carbamoyl phosphate synthase large chain (1104 aa).

The carboxyphosphate synthetic domain stretch occupies residues 1–402 (MPRRTDLKSV…ALQKALRSTE (402 aa)). ATP-binding residues include Arg-129, Arg-169, Gly-175, Gly-176, Glu-208, Ile-210, Glu-215, Gly-241, Val-242, His-243, Gln-285, and Glu-299. Residues 133–328 (KGVVERCGAE…IAKIAARLAV (196 aa)) enclose the ATP-grasp 1 domain. Gln-285, Glu-299, and Asn-301 together coordinate Mg(2+). Mn(2+) is bound by residues Gln-285, Glu-299, and Asn-301. An oligomerization domain region spans residues 403 to 547 (KRGATFSWAG…YSSYDEEDET (145 aa)). Residues 548 to 948 (RPREKAAIVI…AFGKSQTAAY (401 aa)) are carbamoyl phosphate synthetic domain. An ATP-grasp 2 domain is found at 676–867 (GQVLERAGLV…LAKAAARLMA (192 aa)). 10 residues coordinate ATP: Arg-712, Arg-751, Leu-753, Glu-758, Gly-783, Ile-784, His-785, Ser-786, Gln-826, and Glu-838. The Mg(2+) site is built by Gln-826, Glu-838, and Asn-840. 3 residues coordinate Mn(2+): Gln-826, Glu-838, and Asn-840. The MGS-like domain maps to 949 to 1099 (GGLPTAGTAF…QEHTARLNAA (151 aa)). The allosteric domain stretch occupies residues 949–1104 (GGLPTAGTAF…RLNAAWEGRA (156 aa)).

Belongs to the CarB family. In terms of assembly, composed of two chains; the small (or glutamine) chain promotes the hydrolysis of glutamine to ammonia, which is used by the large (or ammonia) chain to synthesize carbamoyl phosphate. Tetramer of heterodimers (alpha,beta)4. The cofactor is Mg(2+). Mn(2+) is required as a cofactor.

It catalyses the reaction hydrogencarbonate + L-glutamine + 2 ATP + H2O = carbamoyl phosphate + L-glutamate + 2 ADP + phosphate + 2 H(+). It carries out the reaction hydrogencarbonate + NH4(+) + 2 ATP = carbamoyl phosphate + 2 ADP + phosphate + 2 H(+). Its pathway is amino-acid biosynthesis; L-arginine biosynthesis; carbamoyl phosphate from bicarbonate: step 1/1. It functions in the pathway pyrimidine metabolism; UMP biosynthesis via de novo pathway; (S)-dihydroorotate from bicarbonate: step 1/3. Its function is as follows. Large subunit of the glutamine-dependent carbamoyl phosphate synthetase (CPSase). CPSase catalyzes the formation of carbamoyl phosphate from the ammonia moiety of glutamine, carbonate, and phosphate donated by ATP, constituting the first step of 2 biosynthetic pathways, one leading to arginine and/or urea and the other to pyrimidine nucleotides. The large subunit (synthetase) binds the substrates ammonia (free or transferred from glutamine from the small subunit), hydrogencarbonate and ATP and carries out an ATP-coupled ligase reaction, activating hydrogencarbonate by forming carboxy phosphate which reacts with ammonia to form carbamoyl phosphate. The polypeptide is Carbamoyl phosphate synthase large chain (Kineococcus radiotolerans (strain ATCC BAA-149 / DSM 14245 / SRS30216)).